The sequence spans 430 residues: ATP-dependent RNA helicase RhlB (430 aa).

Positions 9–37 (QKFSDFALHPQVIEALETKGFHNCTPIQA) match the Q motif motif. Residues 40 to 219 (LPFTLSGRDV…FENMNNAEYV (180 aa)) enclose the Helicase ATP-binding domain. 53–60 (AQTGTGKT) contacts ATP. Positions 165-168 (DEAD) match the DEAD box motif. The 146-residue stretch at 245 to 390 (RLLQTLIEEE…VSRYNSDALM (146 aa)) folds into the Helicase C-terminal domain. Positions 388-430 (ALMTDLPPPKRLTRNRSGNGPRRGGNNNRRSSASRSPNRKRSG) are disordered. The span at 402-423 (NRSGNGPRRGGNNNRRSSASRS) shows a compositional bias: low complexity.

This sequence belongs to the DEAD box helicase family. RhlB subfamily. Component of the RNA degradosome, which is a multiprotein complex involved in RNA processing and mRNA degradation.

Its subcellular location is the cytoplasm. The catalysed reaction is ATP + H2O = ADP + phosphate + H(+). DEAD-box RNA helicase involved in RNA degradation. Has RNA-dependent ATPase activity and unwinds double-stranded RNA. In Erwinia tasmaniensis (strain DSM 17950 / CFBP 7177 / CIP 109463 / NCPPB 4357 / Et1/99), this protein is ATP-dependent RNA helicase RhlB.